Consider the following 290-residue polypeptide: 4-hydroxybenzoate octaprenyltransferase (290 aa).

The next 6 membrane-spanning stretches (helical) occupy residues Leu38–Phe58, Leu99–Ile119, Leu141–Val161, Leu213–Leu233, Ile238–Val258, and Ala268–Leu288.

This sequence belongs to the UbiA prenyltransferase family. Requires Mg(2+) as cofactor.

The protein localises to the cell inner membrane. The enzyme catalyses all-trans-octaprenyl diphosphate + 4-hydroxybenzoate = 4-hydroxy-3-(all-trans-octaprenyl)benzoate + diphosphate. It functions in the pathway cofactor biosynthesis; ubiquinone biosynthesis. Catalyzes the prenylation of para-hydroxybenzoate (PHB) with an all-trans polyprenyl group. Mediates the second step in the final reaction sequence of ubiquinone-8 (UQ-8) biosynthesis, which is the condensation of the polyisoprenoid side chain with PHB, generating the first membrane-bound Q intermediate 3-octaprenyl-4-hydroxybenzoate. This chain is 4-hydroxybenzoate octaprenyltransferase, found in Sodalis glossinidius (strain morsitans).